The chain runs to 297 residues: 4-hydroxy-tetrahydrodipicolinate synthase (297 aa).

Thr45 provides a ligand contact to pyruvate. The active-site Proton donor/acceptor is the Tyr133. Catalysis depends on Lys161, which acts as the Schiff-base intermediate with substrate. Ile203 provides a ligand contact to pyruvate.

Belongs to the DapA family. As to quaternary structure, homotetramer; dimer of dimers.

Its subcellular location is the cytoplasm. The enzyme catalyses L-aspartate 4-semialdehyde + pyruvate = (2S,4S)-4-hydroxy-2,3,4,5-tetrahydrodipicolinate + H2O + H(+). The protein operates within amino-acid biosynthesis; L-lysine biosynthesis via DAP pathway; (S)-tetrahydrodipicolinate from L-aspartate: step 3/4. Catalyzes the condensation of (S)-aspartate-beta-semialdehyde [(S)-ASA] and pyruvate to 4-hydroxy-tetrahydrodipicolinate (HTPA). This chain is 4-hydroxy-tetrahydrodipicolinate synthase, found in Buchnera aphidicola subsp. Cinara cedri (strain Cc).